Reading from the N-terminus, the 30-residue chain is Cycloviolacin-O24 (30 aa).

Positions 1–30 (GLPTCGETCFGGTCNTPGCTCDPWPVCTHN) form a cross-link, cyclopeptide (Gly-Asn). Disulfide bonds link cysteine 5–cysteine 19, cysteine 9–cysteine 21, and cysteine 14–cysteine 27.

In terms of processing, this is a cyclic peptide. As to expression, expressed in leaves but not in petals, petioles, roots and runners (at protein level).

Its function is as follows. Probably participates in a plant defense mechanism. Has hemolytic activity. This is Cycloviolacin-O24 from Viola odorata (Sweet violet).